A 421-amino-acid chain; its full sequence is Protein ECERIFERUM 2 (421 aa).

An N-acetylmethionine modification is found at Met-1.

It belongs to the plant acyltransferase family. Expressed at high levels in the epidermis of stems and young siliques. Expressed in flowers.

The protein resides in the endoplasmic reticulum. It localises to the nucleus. Functionally, involved in biosynthesis of the epicuticular wax. Plays a role in very-long-chain fatty acid (VLCFA) biosynthesis and is required for C28 fatty acid elongation in stem. Despite its classification as a BAHD acyltransferase based on sequence homology, CER2 does not seem to share the catalytic mechanism of the members of the BAHD family. This Arabidopsis thaliana (Mouse-ear cress) protein is Protein ECERIFERUM 2 (CER2).